The following is an 82-amino-acid chain: Photosystem I iron-sulfur center (82 aa).

2 4Fe-4S ferredoxin-type domains span residues 2-31 and 37-68; these read SHTVKIYDTCIGCTQCVRACPTDVLEMVPW and GQIASSPRVEDCVGCKRCETACPTDFLSVRVY. Cys-11, Cys-14, Cys-17, Cys-21, Cys-48, Cys-51, Cys-54, and Cys-58 together coordinate [4Fe-4S] cluster.

In terms of assembly, the eukaryotic PSI reaction center is composed of at least 11 subunits. [4Fe-4S] cluster is required as a cofactor.

The protein localises to the plastid. It is found in the chloroplast thylakoid membrane. The catalysed reaction is reduced [plastocyanin] + hnu + oxidized [2Fe-2S]-[ferredoxin] = oxidized [plastocyanin] + reduced [2Fe-2S]-[ferredoxin]. In terms of biological role, apoprotein for the two 4Fe-4S centers FA and FB of photosystem I (PSI); essential for photochemical activity. FB is the terminal electron acceptor of PSI, donating electrons to ferredoxin. The C-terminus interacts with PsaA/B/D and helps assemble the protein into the PSI complex. Required for binding of PsaD and PsaE to PSI. PSI is a plastocyanin/cytochrome c6-ferredoxin oxidoreductase, converting photonic excitation into a charge separation, which transfers an electron from the donor P700 chlorophyll pair to the spectroscopically characterized acceptors A0, A1, FX, FA and FB in turn. This is Photosystem I iron-sulfur center from Trieres chinensis (Marine centric diatom).